Consider the following 201-residue polypeptide: Small ribosomal subunit protein uS4 (201 aa).

The segment at leucine 19 to isoleucine 41 is disordered. Residues serine 91–alanine 157 enclose the S4 RNA-binding domain.

The protein belongs to the universal ribosomal protein uS4 family. In terms of assembly, part of the 30S ribosomal subunit. Contacts protein S5. The interaction surface between S4 and S5 is involved in control of translational fidelity.

One of the primary rRNA binding proteins, it binds directly to 16S rRNA where it nucleates assembly of the body of the 30S subunit. Its function is as follows. With S5 and S12 plays an important role in translational accuracy. This chain is Small ribosomal subunit protein uS4, found in Mycobacteroides abscessus (strain ATCC 19977 / DSM 44196 / CCUG 20993 / CIP 104536 / JCM 13569 / NCTC 13031 / TMC 1543 / L948) (Mycobacterium abscessus).